A 45-amino-acid chain; its full sequence is Large ribosomal subunit protein bL34 (45 aa).

The segment covering 1–10 (MTQRTLGGTN) has biased composition (polar residues). The interval 1-45 (MTQRTLGGTNRKQKRTSGFRARMRKSNGRKVIQARRKKGRHRLSV) is disordered. The span at 11–45 (RKQKRTSGFRARMRKSNGRKVIQARRKKGRHRLSV) shows a compositional bias: basic residues.

Belongs to the bacterial ribosomal protein bL34 family.

The protein is Large ribosomal subunit protein bL34 of Crocosphaera subtropica (strain ATCC 51142 / BH68) (Cyanothece sp. (strain ATCC 51142)).